The sequence spans 80 residues: Growth factor (80 aa).

The signal sequence occupies residues 1 to 19 (MATRNLVASLLCIMYAVHA). An EGF-like domain is found at 29-73 (HVKVCNHDYENYCLNNGTCFTIALDNVSITPFCVCRINYEGSRCQ). 3 disulfides stabilise this stretch: cysteine 33–cysteine 47, cysteine 41–cysteine 61, and cysteine 63–cysteine 72. Asparagine 44 and asparagine 54 each carry an N-linked (GlcNAc...) asparagine; by host glycan.

It localises to the secreted. The protein is Growth factor of Oryctolagus cuniculus (Rabbit).